Consider the following 211-residue polypeptide: Glutathione S-transferase class-mu 28 kDa isozyme (211 aa).

The residue at position 2 (Ala2) is an N-acetylalanine. The region spanning 4–86 (EHIKVIYFDG…YMAKKHHMMG (83 aa)) is the GST N-terminal domain. Glutathione contacts are provided by residues Tyr10, 10 to 11 (YF), Arg16, 41 to 45 (WPKIK), Leu53, 55 to 56 (AV), and 70 to 71 (ES). Positions 88–211 (TDEEYYSVEK…YLSNRPATPF (124 aa)) constitute a GST C-terminal domain.

The protein belongs to the GST superfamily. Mu family. In terms of assembly, homodimer. In the adult, expressed in excretory epithelial cells but absent from the caecal epithelium and flame cells. Also expressed in the tegument and its extensions into the parenchyma. In the schistosomulum, expressed in the tegument and associated structures. Not expressed in digestive tract, reproductive organs or muscles (at protein level).

The enzyme catalyses RX + glutathione = an S-substituted glutathione + a halide anion + H(+). In terms of biological role, conjugation of reduced glutathione to a wide number of exogenous and endogenous hydrophobic electrophiles. Functionally, GST isoenzymes appear to play a central role in the parasite detoxification system. Other functions are also suspected including a role in increasing the solubility of haematin in the parasite gut. This chain is Glutathione S-transferase class-mu 28 kDa isozyme (GST28), found in Schistosoma mansoni (Blood fluke).